Consider the following 535-residue polypeptide: Bifunctional purine biosynthesis protein PurH (535 aa).

The MGS-like domain maps to 6 to 151 (TRLPVRRALI…KNHKDVAIVV (146 aa)).

It belongs to the PurH family.

It carries out the reaction (6R)-10-formyltetrahydrofolate + 5-amino-1-(5-phospho-beta-D-ribosyl)imidazole-4-carboxamide = 5-formamido-1-(5-phospho-D-ribosyl)imidazole-4-carboxamide + (6S)-5,6,7,8-tetrahydrofolate. It catalyses the reaction IMP + H2O = 5-formamido-1-(5-phospho-D-ribosyl)imidazole-4-carboxamide. It functions in the pathway purine metabolism; IMP biosynthesis via de novo pathway; 5-formamido-1-(5-phospho-D-ribosyl)imidazole-4-carboxamide from 5-amino-1-(5-phospho-D-ribosyl)imidazole-4-carboxamide (10-formyl THF route): step 1/1. Its pathway is purine metabolism; IMP biosynthesis via de novo pathway; IMP from 5-formamido-1-(5-phospho-D-ribosyl)imidazole-4-carboxamide: step 1/1. In Pseudomonas putida (strain GB-1), this protein is Bifunctional purine biosynthesis protein PurH.